Reading from the N-terminus, the 398-residue chain is Probable sugar efflux transporter (398 aa).

Transmembrane regions (helical) follow at residues V15–L35, V50–L70, L81–F101, V103–A123, A136–I156, T169–P189, P209–Y229, F246–G266, L275–A295, L301–V321, V333–G353, and A364–F384.

This sequence belongs to the major facilitator superfamily. SotB (TC 2.A.1.2) family.

Its subcellular location is the cell inner membrane. Its function is as follows. Involved in the efflux of sugars. The physiological role may be the reduction of the intracellular concentration of toxic sugars or sugar metabolites. This chain is Probable sugar efflux transporter, found in Enterobacter sp. (strain 638).